A 474-amino-acid chain; its full sequence is Citrate synthase 4, mitochondrial (474 aa).

A mitochondrion-targeting transit peptide spans 1–16 (MVFFRSVSAFTRLRSR). Residues His-308, His-354, and Asp-409 contribute to the active site.

It belongs to the citrate synthase family. As to quaternary structure, homodimer.

The protein resides in the mitochondrion matrix. The catalysed reaction is oxaloacetate + acetyl-CoA + H2O = citrate + CoA + H(+). Its pathway is carbohydrate metabolism; tricarboxylic acid cycle; isocitrate from oxaloacetate: step 1/2. This is Citrate synthase 4, mitochondrial (CSY4) from Arabidopsis thaliana (Mouse-ear cress).